The sequence spans 64 residues: Large ribosomal subunit protein bL35 (64 aa).

Positions 1-55 (MPKMKSNKSVAARFKLTGSGQLKRTRPGKRHKLSKRSSQQKRNLSKQPLVDQGQV) are disordered. Residues 23–39 (KRTRPGKRHKLSKRSSQ) are compositionally biased toward basic residues.

It belongs to the bacterial ribosomal protein bL35 family.

The protein is Large ribosomal subunit protein bL35 of Chlamydia muridarum (strain MoPn / Nigg).